Consider the following 599-residue polypeptide: Elongation factor 4 (599 aa).

Residues 2–184 (KNIRNFSIIA…RLVRDIPPPE (183 aa)) form the tr-type G domain. GTP contacts are provided by residues 14–19 (DHGKST) and 131–134 (NKID).

It belongs to the TRAFAC class translation factor GTPase superfamily. Classic translation factor GTPase family. LepA subfamily.

The protein resides in the cell inner membrane. The enzyme catalyses GTP + H2O = GDP + phosphate + H(+). Functionally, required for accurate and efficient protein synthesis under certain stress conditions. May act as a fidelity factor of the translation reaction, by catalyzing a one-codon backward translocation of tRNAs on improperly translocated ribosomes. Back-translocation proceeds from a post-translocation (POST) complex to a pre-translocation (PRE) complex, thus giving elongation factor G a second chance to translocate the tRNAs correctly. Binds to ribosomes in a GTP-dependent manner. In Escherichia coli (strain SE11), this protein is Elongation factor 4.